We begin with the raw amino-acid sequence, 220 residues long: Octanoyltransferase (220 aa).

The BPL/LPL catalytic domain maps to 34–209 (ENSQDEIWVV…TLSQELGLAN (176 aa)). Residues 73–80 (RGGQVTYH), 140–142 (SLG), and 153–155 (GLA) each bind substrate. C171 acts as the Acyl-thioester intermediate in catalysis.

It belongs to the LipB family.

It is found in the cytoplasm. It catalyses the reaction octanoyl-[ACP] + L-lysyl-[protein] = N(6)-octanoyl-L-lysyl-[protein] + holo-[ACP] + H(+). It participates in protein modification; protein lipoylation via endogenous pathway; protein N(6)-(lipoyl)lysine from octanoyl-[acyl-carrier-protein]: step 1/2. Catalyzes the transfer of endogenously produced octanoic acid from octanoyl-acyl-carrier-protein onto the lipoyl domains of lipoate-dependent enzymes. Lipoyl-ACP can also act as a substrate although octanoyl-ACP is likely to be the physiological substrate. This is Octanoyltransferase from Shewanella piezotolerans (strain WP3 / JCM 13877).